The sequence spans 650 residues: DNA gyrase subunit B (650 aa).

The region spanning 429–543 is the Toprim domain; it reads NELFIVEGDS…AGYVYIAQPP (115 aa). Mg(2+)-binding residues include Glu-435, Asp-508, and Asp-510.

The protein belongs to the type II topoisomerase GyrB family. In terms of assembly, heterotetramer, composed of two GyrA and two GyrB chains. In the heterotetramer, GyrA contains the active site tyrosine that forms a transient covalent intermediate with DNA, while GyrB binds cofactors and catalyzes ATP hydrolysis. It depends on Mg(2+) as a cofactor. Requires Mn(2+) as cofactor. The cofactor is Ca(2+).

The protein localises to the cytoplasm. It catalyses the reaction ATP-dependent breakage, passage and rejoining of double-stranded DNA.. In terms of biological role, a type II topoisomerase that negatively supercoils closed circular double-stranded (ds) DNA in an ATP-dependent manner to modulate DNA topology and maintain chromosomes in an underwound state. Negative supercoiling favors strand separation, and DNA replication, transcription, recombination and repair, all of which involve strand separation. Also able to catalyze the interconversion of other topological isomers of dsDNA rings, including catenanes and knotted rings. Type II topoisomerases break and join 2 DNA strands simultaneously in an ATP-dependent manner. This chain is DNA gyrase subunit B, found in Streptococcus pyogenes serotype M18 (strain MGAS8232).